The sequence spans 673 residues: Inactive polyglycylase TTLL10 (673 aa).

The disordered stretch occupies residues 1-132 (MDHSCTRFIH…ADSDDTNAAG (132 aa)). Over residues 8–36 (FIHRRGPPTRTRAGFKRGKRPRIQQRPRA) the composition is skewed to basic residues. The segment covering 52–62 (ASQPGPCPAPG) has biased composition (pro residues). Residues 89–105 (PDHDADGHCGPDLEGAE) are compositionally biased toward basic and acidic residues. The TTL domain occupies 155-552 (PGPFFYIGGS…TFRKSLRGQK (398 aa)). ATP is bound by residues 362–365 (QRYI), Lys-375, and Asp-377. Residues 569-673 (EADPRPHLGG…EREEPENARP (105 aa)) form a disordered region. A compositionally biased stretch (pro residues) spans 612–627 (PAPPPLVPQRPRPPGP). A compositionally biased stretch (basic and acidic residues) spans 661 to 673 (AKEEREEPENARP).

Inactive polyglycylase. The protein is Inactive polyglycylase TTLL10 of Homo sapiens (Human).